The chain runs to 340 residues: MAASHPYFNLPDFTQPSPPSTPASLPSKHHHRCGPSNATKGLFVALLGGGLSAGFVGPFSRMAYQTSQLPSLELLIFRCLFHLPIALLLKFRGDPLLGPPDVRVRAFLHAILNVLSIGCAYSAVQVVPAGNAVTVRKGSSTVCSALLALCLESQGLSGYAWCGLFGSTLGLIIIVGPGLGTLQEGTTGLYTALGYVLAFLGGLALSLGLQIYRSLHFPSCLPTVAFLFGLVGLMVSVPGLFVLQTPVLPQDTLSWSCVVAVGLLALVSFVCVSYAVTKAHPALVCAVLHSEVVVALMLQYYVLYETVAPSDIMGAGVVLGSIAIITAQNLSCDKEGQTEE.

Residues 11 to 33 are disordered; sequence PDFTQPSPPSTPASLPSKHHHRC. 9 helical membrane-spanning segments follow: residues 39–59, 69–89, 107–127, 160–180, 189–209, 223–243, 257–277, 283–303, and 307–327; these read TKGL…VGPF, LPSL…ALLL, FLHA…VQVV, AWCG…PGLG, LYTA…SLGL, TVAF…LFVL, CVVA…YAVT, LVCA…YYVL, and VAPS…IITA. In terms of domain architecture, EamA 1 spans 51–176; sequence LSAGFVGPFS…STLGLIIIVG (126 aa). Residues 274–327 form the EamA 2 domain; that stretch reads YAVTKAHPALVCAVLHSEVVVALMLQYYVLYETVAPSDIMGAGVVLGSIAIITA.

This sequence belongs to the SLC35G solute transporter family.

It is found in the membrane. The sequence is that of Solute carrier family 35 member G3 (Slc35g3) from Mus musculus (Mouse).